The chain runs to 468 residues: 6-phospho-beta-galactosidase (468 aa).

D-galactose 6-phosphate is bound by residues glutamine 19, histidine 116, asparagine 159, glutamate 160, and asparagine 297. The active-site Proton donor is the glutamate 160. The Nucleophile role is filled by glutamate 375. D-galactose 6-phosphate is bound by residues serine 428, tryptophan 429, lysine 435, and tyrosine 437.

Belongs to the glycosyl hydrolase 1 family.

The catalysed reaction is a 6-phospho-beta-D-galactoside + H2O = D-galactose 6-phosphate + an alcohol. It participates in carbohydrate metabolism; lactose degradation; D-galactose 6-phosphate and beta-D-glucose from lactose 6-phosphate: step 1/1. The chain is 6-phospho-beta-galactosidase from Streptococcus pyogenes serotype M6 (strain ATCC BAA-946 / MGAS10394).